Consider the following 354-residue polypeptide: Mating-type protein MAT-1 (354 aa).

The segment at residues 60 to 117 (KAKKALNAFVGFRCYYIAIPAFKQWPMKKLSNLISLLWDRDPNKSLWSLMAKAWSNIR) is a DNA-binding region (alpha box).

It belongs to the MATALPHA1 family.

The protein resides in the nucleus. Mating type proteins are sequence specific DNA-binding proteins that act as master switches in fungal differentiation by controlling gene expression in a cell type-specific fashion. Transcriptional activator that induces the transcription of alpha-specific genes. In Cochliobolus cymbopogonis (Curvularia cymbopogonis), this protein is Mating-type protein MAT-1 (MAT1).